The primary structure comprises 413 residues: S-adenosylmethionine synthase (413 aa).

H15 contacts ATP. D17 contacts Mg(2+). E43 is a K(+) binding site. Positions 56 and 100 each coordinate L-methionine. Residues 100–110 form a flexible loop region; the sequence is QSPDISQGVND. ATP-binding positions include 171–173, 248–249, D257, 263–264, A280, and K284; these read DGK, KF, and RK. D257 contacts L-methionine. Residue K288 participates in L-methionine binding.

Belongs to the AdoMet synthase family. In terms of assembly, homotetramer; dimer of dimers. The cofactor is Mg(2+). It depends on K(+) as a cofactor.

The protein resides in the cytoplasm. The catalysed reaction is L-methionine + ATP + H2O = S-adenosyl-L-methionine + phosphate + diphosphate. Its pathway is amino-acid biosynthesis; S-adenosyl-L-methionine biosynthesis; S-adenosyl-L-methionine from L-methionine: step 1/1. Functionally, catalyzes the formation of S-adenosylmethionine (AdoMet) from methionine and ATP. The overall synthetic reaction is composed of two sequential steps, AdoMet formation and the subsequent tripolyphosphate hydrolysis which occurs prior to release of AdoMet from the enzyme. The polypeptide is S-adenosylmethionine synthase (Prochlorococcus marinus (strain MIT 9301)).